The sequence spans 491 residues: MSSILSADDLNDFISPGAVCIKPIKVDKTTENAEIEIGAQGQALEVGIDGTQKELEPAQLSLSDCLACSGCITSAESVLVALQSHTQLLDELKKEAELPSGEKRIFVCSVSHQARASFAAAFGVSVEVADAKLHSLLLDTLGFDYVVGMGVGREISLIHSAQEVEKSTQKPVMAASCPGWVCYVEKTHPHVIPYLSSVKSPQQICGSLLKKVICDTRRVKPSQVYHVSVMPCFDKKLEASRDEFSVEEAGQEEKIRDVDCVITTKEVVQLLTEKDMSFGGLPEIDKSRLYTSVPETWPAERDWANHVGSSSGGYLHHVLTALRLRHDPLETRTRVDASMGKNQDVMEYSVIDTETGETVASAAQVYGFRNIQNLVRKLKPSRGKGKVVSARKSTKTVSAALNPSTYSYIEVMACPGGCINGGGQVGAPEGVAAREWKDETEKMYNSIPSEAVSEEVVDWATKVWGPHDEDKLVTAHYQEVEKVDQGLASTW.

[4Fe-4S] cluster contacts are provided by Cys20, Cys65, Cys68, Cys71, Cys177, Cys232, Cys414, and Cys418.

It belongs to the NARF family.

In terms of biological role, component of the cytosolic Fe/S protein assembly machinery. Required for maturation of extramitochondrial Fe/S proteins. May play a role in the transfer of pre-assembled Fe/S clusters to target apoproteins. This Yarrowia lipolytica (strain CLIB 122 / E 150) (Yeast) protein is Cytosolic Fe-S cluster assembly factor NAR1 (NAR1).